The primary structure comprises 176 residues: Peptide deformylase (176 aa).

Fe cation is bound by residues Cys-94 and His-136. The active site involves Glu-137. His-140 contacts Fe cation.

This sequence belongs to the polypeptide deformylase family. It depends on Fe(2+) as a cofactor.

The enzyme catalyses N-terminal N-formyl-L-methionyl-[peptide] + H2O = N-terminal L-methionyl-[peptide] + formate. In terms of biological role, removes the formyl group from the N-terminal Met of newly synthesized proteins. Requires at least a dipeptide for an efficient rate of reaction. N-terminal L-methionine is a prerequisite for activity but the enzyme has broad specificity at other positions. In Bartonella henselae (strain ATCC 49882 / DSM 28221 / CCUG 30454 / Houston 1) (Rochalimaea henselae), this protein is Peptide deformylase.